The chain runs to 378 residues: C-C chemokine receptor type 7 (378 aa).

An N-terminal signal peptide occupies residues Met1–Cys24. The Extracellular segment spans residues Gln25–Trp59. An N-linked (GlcNAc...) asparagine glycan is attached at Asn36. A helical transmembrane segment spans residues Phe60–Phe86. Residues Lys87–Thr95 are Cytoplasmic-facing. Residues Tyr96 to Tyr116 traverse the membrane as a helical segment. At Ser117 to Lys130 the chain is on the extracellular side. A disulfide bridge connects residues Cys129 and Cys210. The chain crosses the membrane as a helical span at residues Gly131 to Ile152. Residues Asp153–Arg170 are Cytoplasmic-facing. Residues Val171 to Ile191 form a helical membrane-spanning segment. The Extracellular portion of the chain corresponds to Pro192–Ala219. Residues Leu220–Ile247 traverse the membrane as a helical segment. Over Arg248–Lys263 the chain is Cytoplasmic. A helical transmembrane segment spans residues Val264 to Ala289. The Extracellular portion of the chain corresponds to Asn290–Ser313. The chain crosses the membrane as a helical span at residues Leu314 to Val331. At Lys332 to Pro378 the chain is on the cytoplasmic side.

Belongs to the G-protein coupled receptor 1 family.

Its subcellular location is the cell membrane. Its function is as follows. Receptor for the MIP-3-beta chemokine. The polypeptide is C-C chemokine receptor type 7 (Ccr7) (Mus musculus (Mouse)).